We begin with the raw amino-acid sequence, 436 residues long: Serine hydroxymethyltransferase (436 aa).

(6S)-5,6,7,8-tetrahydrofolate is bound by residues Leu-120 and 124-126 (GHL). An N6-(pyridoxal phosphate)lysine modification is found at Lys-229.

It belongs to the SHMT family. Homodimer. It depends on pyridoxal 5'-phosphate as a cofactor.

It is found in the cytoplasm. It carries out the reaction (6R)-5,10-methylene-5,6,7,8-tetrahydrofolate + glycine + H2O = (6S)-5,6,7,8-tetrahydrofolate + L-serine. Its pathway is one-carbon metabolism; tetrahydrofolate interconversion. It participates in amino-acid biosynthesis; glycine biosynthesis; glycine from L-serine: step 1/1. Its function is as follows. Catalyzes the reversible interconversion of serine and glycine with tetrahydrofolate (THF) serving as the one-carbon carrier. This reaction serves as the major source of one-carbon groups required for the biosynthesis of purines, thymidylate, methionine, and other important biomolecules. Also exhibits THF-independent aldolase activity toward beta-hydroxyamino acids, producing glycine and aldehydes, via a retro-aldol mechanism. The polypeptide is Serine hydroxymethyltransferase (Roseiflexus castenholzii (strain DSM 13941 / HLO8)).